We begin with the raw amino-acid sequence, 983 residues long: MTSTTGLRNLTLSFKKQLTTSTRTIMTIGDKQKWTATNVRNTFLDYFKSKEHKFVKSSPVVPFDDPTLLFANAGMNQYKPIFLGTVDPASDFYTLKRAYNSQKCIRAGGKHNDLEDVGKDSYHHTFFEMLGNWSFGDYFKKEAITYSWTLLTEVYGIPKDRLYVTYFEGDEKLGLEPDTEARELWKNVGVPDDHILPGNAKDNFWEMGDQGPCGPCSEIHYDRIGGRNAASLVNMDDPDVLEVWNLVFIQFNREQDGSLKPLPAKHIDTGMGFERLVSVLQDVRSNYDTDVFTPLFERIQEITSVRPYSGNFGENDKDGIDTAYRVLADHVRTLTFALADGGVPNNEGRGYVLRRILRRGARYARKYMNYPIGNFFSTLAPTLISQVQDIFPELAKDPAFLFEILDEEEASFAKTLDRGERLFEKYASAASKTESKTLDGKQVWRLYDTYGFPVDLTELMAEEQGLKIDGPGFEKAKQESYEASKRGGKKDQSDLIKLNVHELSELNDAKVPKTNDEFKYGSANVEGTILKLHDGTNFVDEITEPGKKYGIILDKTCFYAEQGGQEYDTGKIVIDDAAEFNVENVQLYNGFVFHTGSLEEGKLSVGDKIIASFDELRRFPIKNNHTGTHILNFALKETLGNDVDQKGSLVAPEKLRFDFSHKKAVSNEELKKVEDICNEQIKENLQVFYKEIPLDLAKSIDGVRAVFGETYPDPVRVVSVGKPIEELLANPANEEWTKYSIEFCGGTHVNKTGDIKYFVILEESGIAKGIRRIVAVTGTEAFEAQRLAEQFAADLDAADKLPFSPIKEKKLKELGVKLGQLSISVITKNELKQKFNKIEKAVKDEVKSRAKKENKQTLDEVKTFFETNENAPYLVKFIDISPNAKAITEAINYMKSNDSVKDKSIYLLAGNDPEGRVAHGCYISNAALAKGIDGSALAKKVSSIIGGKAGGKGNVFQGMGDKPAAIKDAVDDLESLFKEKLSI.

The N-terminal 24 residues, 1-24 (MTSTTGLRNLTLSFKKQLTTSTRT), are a transit peptide targeting the mitochondrion. Ser-504 carries the phosphoserine modification. The Zn(2+) site is built by His-625, His-629, Cys-744, and His-748. Phosphoserine is present on Ser-975.

Belongs to the class-II aminoacyl-tRNA synthetase family. Monomer. Zn(2+) is required as a cofactor.

It is found in the cytoplasm. Its subcellular location is the mitochondrion. The catalysed reaction is tRNA(Ala) + L-alanine + ATP = L-alanyl-tRNA(Ala) + AMP + diphosphate. Functionally, catalyzes the attachment of alanine to tRNA(Ala) in a two-step reaction: alanine is first activated by ATP to form Ala-AMP and then transferred to the acceptor end of tRNA(Ala). Also edits incorrectly charged tRNA(Ala) via its editing domain. The chain is Alanine--tRNA ligase, mitochondrial from Saccharomyces cerevisiae (strain ATCC 204508 / S288c) (Baker's yeast).